A 128-amino-acid chain; its full sequence is MNYTILVTGPPYGTQNSSTAFLFCQSLLKTKHILHSVFFYCDGVLNANNMTTPAIDEFNLINAWQGLNKKHQVKLYVCNSAALRRGVIEDEKLFNMNVKKGNLALSFQLSGLIELAKSIKICDRIIQF.

Catalysis depends on Cys-78, which acts as the Cysteine persulfide intermediate.

It belongs to the DsrE/TusD family. Heterohexamer, formed by a dimer of trimers. The hexameric TusBCD complex contains 2 copies each of TusB, TusC and TusD. The TusBCD complex interacts with TusE.

It is found in the cytoplasm. Functionally, part of a sulfur-relay system required for 2-thiolation of 5-methylaminomethyl-2-thiouridine (mnm(5)s(2)U) at tRNA wobble positions. Accepts sulfur from TusA and transfers it in turn to TusE. This Buchnera aphidicola subsp. Acyrthosiphon pisum (strain 5A) protein is Sulfurtransferase TusD.